Reading from the N-terminus, the 514-residue chain is ATP synthase subunit alpha (514 aa).

ATP is bound at residue 170–177 (GDRQIGKT).

This sequence belongs to the ATPase alpha/beta chains family. As to quaternary structure, F-type ATPases have 2 components, CF(1) - the catalytic core - and CF(0) - the membrane proton channel. CF(1) has five subunits: alpha(3), beta(3), gamma(1), delta(1), epsilon(1). CF(0) has three main subunits: a(1), b(2) and c(9-12). The alpha and beta chains form an alternating ring which encloses part of the gamma chain. CF(1) is attached to CF(0) by a central stalk formed by the gamma and epsilon chains, while a peripheral stalk is formed by the delta and b chains.

Its subcellular location is the cell inner membrane. The catalysed reaction is ATP + H2O + 4 H(+)(in) = ADP + phosphate + 5 H(+)(out). Functionally, produces ATP from ADP in the presence of a proton gradient across the membrane. The alpha chain is a regulatory subunit. This chain is ATP synthase subunit alpha, found in Pseudomonas putida (strain W619).